The sequence spans 359 residues: MKKYLALALIAPLLISCSTTKKGDTYNEAWVKDTNGFDILMGQFAHNIENFWGFKEVVIAGPKDYVKYTDQYQTRSHINFDDGTITIETIAGTEPAAHLRRAIIKTLLMGDDPSSVDLYSDVDDITISKEPFLYGQVVDNTGQPIRWEGRASNFADYLLKNRLKSRSNGLRIIYSVTINMVPNHLDKRAHKYLGMVRQASRKYGVDESLILAIMQTESSFNPYAVSRSDALGLMQVVQHTAGKDVFRSQGKSGTPSRSFLFDPASNIDTGTAYLAMLNNVYLGGIDNPTSRRYAVITAYNGGAGSVLRVFSNDKIQAANIINTMTPGDVYQTLTTRHPSAESRRYLYKVNTAQKSYRRR.

The first 16 residues, 1–16 (MKKYLALALIAPLLIS), serve as a signal peptide directing secretion. Residue C17 is the site of N-palmitoyl cysteine attachment. C17 carries the S-diacylglycerol cysteine lipid modification.

It belongs to the transglycosylase Slt family.

It is found in the cell outer membrane. It catalyses the reaction Exolytic cleavage of the (1-&gt;4)-beta-glycosidic linkage between N-acetylmuramic acid (MurNAc) and N-acetylglucosamine (GlcNAc) residues in peptidoglycan, from either the reducing or the non-reducing ends of the peptidoglycan chains, with concomitant formation of a 1,6-anhydrobond in the MurNAc residue.. In terms of biological role, murein-degrading enzyme. May play a role in recycling of muropeptides during cell elongation and/or cell division. The sequence is that of Membrane-bound lytic murein transglycosylase C from Escherichia coli O7:K1 (strain IAI39 / ExPEC).